The chain runs to 594 residues: MKNIRNFSIIAHIDHGKSTLSDRFIQVCNGLSEREMKEQVLDSMDIERERGITIKAQSVTLDYVARDGQTYQLNFIDTPGHVDFSYEVSRSLAACEGALLVVDAAQGVEAQTVANCYTAIEQNLEVIPILNKIDLPSAEPDRVAEEIEEIIGIDATGATTCSAKTGIGVEDVLETIVAKVPAPEGDVNAKLQALIIDSWFDNYLGVVSLVRIKNGTLKKGEKFKVMSTGVSYQVDRVGVFTPKMKDLDHLKAGEVGFIVAGIKDIHGAPVGDTLTHTHNPTDKPVPGFKKVQPQVYAGMFTISSDDYPDFREALDKLSLNDASLFFEPEVSQALGFGFRCGFLGMLHMEIIQERLEREYNLDLITSAPTVVYKAVKKDGETIDVDSPSKLPEPGAIAEIHEPIVRANILVPKDYVGSVITICVEKRGVQVDLNYVGSQVSITYDLPMIEVVSDFFDTLKSVTKGYGSLDYELIRYEAADMVRLDVLINGDKVDALASIVHKDQAKYKGRELVERLKELIPRQMFEVAIQAAIGGTIVARSTVKALRKNVLAKCYGGDVSRKKKLLEKQKEGKKRMKNIGSVEIPQEAFLSVLKK.

In terms of domain architecture, tr-type G spans 2 to 184 (KNIRNFSIIA…TIVAKVPAPE (183 aa)). Residues 14–19 (DHGKST) and 131–134 (NKID) each bind GTP.

This sequence belongs to the TRAFAC class translation factor GTPase superfamily. Classic translation factor GTPase family. LepA subfamily.

It localises to the cell inner membrane. It catalyses the reaction GTP + H2O = GDP + phosphate + H(+). Required for accurate and efficient protein synthesis under certain stress conditions. May act as a fidelity factor of the translation reaction, by catalyzing a one-codon backward translocation of tRNAs on improperly translocated ribosomes. Back-translocation proceeds from a post-translocation (POST) complex to a pre-translocation (PRE) complex, thus giving elongation factor G a second chance to translocate the tRNAs correctly. Binds to ribosomes in a GTP-dependent manner. In Francisella philomiragia subsp. philomiragia (strain ATCC 25017 / CCUG 19701 / FSC 153 / O#319-036), this protein is Elongation factor 4.